The primary structure comprises 308 residues: Glycine--tRNA ligase alpha subunit (308 aa).

The protein belongs to the class-II aminoacyl-tRNA synthetase family. As to quaternary structure, tetramer of two alpha and two beta subunits.

The protein resides in the cytoplasm. The enzyme catalyses tRNA(Gly) + glycine + ATP = glycyl-tRNA(Gly) + AMP + diphosphate. The polypeptide is Glycine--tRNA ligase alpha subunit (Streptococcus pyogenes serotype M3 (strain SSI-1)).